Here is a 451-residue protein sequence, read N- to C-terminus: MTRKFFGTDGIRGQANSFPMTPEIAMKVGMAVGYIFRRKGQASRVVIGKDTRRSGYMLENALVAGFTAAGMDVFLLGPIPTPAVAMLCRSLRADIGVMISASHNPFYDNGIKLFGPDGFKLSDQIELQIEAMIEGDMTPFLASHGDVGRAKRVDGDIYRYIEFAKRTLPRNISLNGLRVVVDCANGAGYKVAPAALWELGAEVITINNEPNGININEDCGSTHPIGLMKKVHEVRADVGIALDGDADRVLLVDENGTVIDGDQLMAVIAESWAASNRLEGGGIVATVMSNLGLERFLADRNLTLARTKVGDRYVVEHMREHGFNVGGEQSGHIVLSDFATTGDGLISALQILAVAQEQNKPISDVCRKFQPVPQLLKNVRTTGGKPLENKRVKSAIDEAKERLGGQGRLVIRPSGTEPLIRVMAEGDDRGLVEKVVNDIIDVISSESSAAA.

S102 acts as the Phosphoserine intermediate in catalysis. S102, D243, D245, and D247 together coordinate Mg(2+). S102 is subject to Phosphoserine.

The protein belongs to the phosphohexose mutase family. Mg(2+) is required as a cofactor. Activated by phosphorylation.

It catalyses the reaction alpha-D-glucosamine 1-phosphate = D-glucosamine 6-phosphate. Catalyzes the conversion of glucosamine-6-phosphate to glucosamine-1-phosphate. This is Phosphoglucosamine mutase from Brucella canis (strain ATCC 23365 / NCTC 10854 / RM-666).